Here is a 442-residue protein sequence, read N- to C-terminus: ATP-dependent protease ATPase subunit HslU (442 aa).

ATP-binding positions include Ile18, 60-65 (GVGKTE), Asp255, Glu320, and Arg392.

This sequence belongs to the ClpX chaperone family. HslU subfamily. A double ring-shaped homohexamer of HslV is capped on each side by a ring-shaped HslU homohexamer. The assembly of the HslU/HslV complex is dependent on binding of ATP.

The protein resides in the cytoplasm. Functionally, ATPase subunit of a proteasome-like degradation complex; this subunit has chaperone activity. The binding of ATP and its subsequent hydrolysis by HslU are essential for unfolding of protein substrates subsequently hydrolyzed by HslV. HslU recognizes the N-terminal part of its protein substrates and unfolds these before they are guided to HslV for hydrolysis. In Shewanella sp. (strain W3-18-1), this protein is ATP-dependent protease ATPase subunit HslU.